We begin with the raw amino-acid sequence, 600 residues long: Proline--tRNA ligase (600 aa).

It belongs to the class-II aminoacyl-tRNA synthetase family. ProS type 1 subfamily. In terms of assembly, homodimer.

The protein resides in the cytoplasm. It catalyses the reaction tRNA(Pro) + L-proline + ATP = L-prolyl-tRNA(Pro) + AMP + diphosphate. Catalyzes the attachment of proline to tRNA(Pro) in a two-step reaction: proline is first activated by ATP to form Pro-AMP and then transferred to the acceptor end of tRNA(Pro). As ProRS can inadvertently accommodate and process non-cognate amino acids such as alanine and cysteine, to avoid such errors it has two additional distinct editing activities against alanine. One activity is designated as 'pretransfer' editing and involves the tRNA(Pro)-independent hydrolysis of activated Ala-AMP. The other activity is designated 'posttransfer' editing and involves deacylation of mischarged Ala-tRNA(Pro). The misacylated Cys-tRNA(Pro) is not edited by ProRS. This chain is Proline--tRNA ligase, found in Prochlorococcus marinus (strain AS9601).